The primary structure comprises 549 residues: Cilia- and flagella-associated protein 45 (549 aa).

The disordered stretch occupies residues 1-27 (MPLSTAGVLSSASTASNRSRNRPRYRT). 2 coiled-coil regions span residues 119 to 232 (KEEL…MMEV) and 259 to 393 (IVEQ…KRNQ). A disordered region spans residues 391–416 (RNQEVADREWRRKEKENAQKKMETEA).

Belongs to the CFAP45 family. As to quaternary structure, microtubule inner protein component of sperm flagellar doublet microtubules. Interacts with AK8; dimerization with AK8 may create a cavity at the interface of the dimer that can accommodate AMP. Interacts with CFAP52. Interacts with ENKUR. Directly interacts with DNALI1. Interacts with DNAH11. Interacts with DNAI1. As to expression, expressed in trachea multiciliated cells.

It localises to the cytoplasm. Its subcellular location is the cytoskeleton. The protein resides in the cilium axoneme. The protein localises to the flagellum axoneme. It is found in the cell projection. It localises to the cilium. Its subcellular location is the flagellum. Functionally, microtubule inner protein (MIP) part of the dynein-decorated doublet microtubules (DMTs) in cilia axoneme, which is required for motile cilia beating. It is an AMP-binding protein that may facilitate dynein ATPase-dependent ciliary and flagellar beating via adenine nucleotide homeostasis. May function as a donor of AMP to AK8 and hence promote ADP production. The sequence is that of Cilia- and flagella-associated protein 45 from Bos taurus (Bovine).